A 389-amino-acid chain; its full sequence is Probable nitrate transporter NarT (389 aa).

12 helical membrane passes run 14–34 (TLSL…MPFI), 45–65 (ISII…PFGY), 69–89 (IVGA…PIFF), 97–117 (GMLM…SVGV), 139–159 (GNIG…IIGW), 161–181 (TTVR…FIFG), 211–231 (WYFI…NYLV), 246–266 (GVFI…GDKF), 268–288 (AVKV…ILGI), 294–314 (LFTV…GLIF), 331–351 (IVSM…TYVA), and 353–373 (LTGS…IALF).

The protein belongs to the major facilitator superfamily. Nitrate/nitrite porter (TC 2.A.1.8) family.

The protein localises to the cell membrane. Probably required for nitrate uptake under anoxic conditions. Also possibly involved in excretion of nitrite produced by the dissimilatory reduction of nitrate. This is Probable nitrate transporter NarT (narT) from Staphylococcus aureus (strain MRSA252).